Consider the following 211-residue polypeptide: Claudin-7 (211 aa).

Topologically, residues 1–7 are cytoplasmic; it reads MANSGLQ. Residues 8-28 traverse the membrane as a helical segment; sequence LLGFSMAMLGWVGLIASTAIP. At 29–81 the chain is on the extracellular side; the sequence is QWQMSSYAGDNIITAQAMYKGLWMECVTQSTGMMSCKMYDSVLALPGALQATR. A helical membrane pass occupies residues 82–102; the sequence is ALMVVSLVLGFLAMFVATMGM. At 103-119 the chain is on the cytoplasmic side; it reads KCTRCGGDDKAKKARIA. The helical transmembrane segment at 120 to 140 threads the bilayer; sequence MTGGIVFIVAGLAALVACSWI. Topologically, residues 141–160 are extracellular; the sequence is GHQIVTDFYNPLTPMNVKYE. Residues 161 to 181 form a helical membrane-spanning segment; it reads FGPAIFIGWAGSALVLLGGAL. The Cytoplasmic portion of the chain corresponds to 182-211; that stretch reads LSCSCPGSESKAAYRAPRSYPKSNSSKEYV. The interval 210-211 is interactions with TJP1, TJP2 and TJP3; it reads YV.

It belongs to the claudin family. As to quaternary structure, directly interacts with TJP1/ZO-1, TJP2/ZO-2 and TJP3/ZO-3. The phosphorylated form interacts with EPCAM. In terms of processing, phosphorylated. Expressed predominantly in lung and kidney.

It localises to the cell membrane. The protein resides in the basolateral cell membrane. It is found in the cell junction. Its subcellular location is the tight junction. In terms of biological role, plays a major role in tight junction-specific obliteration of the intercellular space, through calcium-independent cell-adhesion activity. The chain is Claudin-7 (Cldn7) from Mus musculus (Mouse).